A 149-amino-acid chain; its full sequence is Calmodulin-1 (149 aa).

Ala-2 carries the N-acetylalanine modification. EF-hand domains are found at residues 8–43 (DQISEFKEAFSLFDKDGDGCITTKELGTVMRSLGQN), 44–79 (PTEAELQDMINEVDADGNGTIDFPEFLNLMARKMKD), 81–116 (DSEEELKEAFRVFDKDQNGFISAAELRHVMTNLGEK), and 117–149 (LTDEEVDEMIREADVDGDGQINYEEFVKVMMAK). Positions 21, 23, 25, 27, 32, 57, 59, 61, 63, 68, 94, 96, 98, and 105 each coordinate Ca(2+). N6,N6,N6-trimethyllysine is present on Lys-116. Ca(2+) is bound by residues Asp-130, Asp-132, Asp-134, Gln-136, and Glu-141.

It belongs to the calmodulin family.

Its function is as follows. Calmodulin mediates the control of a large number of enzymes, ion channels and other proteins by Ca(2+). Among the enzymes to be stimulated by the calmodulin-Ca(2+) complex are a number of protein kinases and phosphatases. This chain is Calmodulin-1 (CAM81), found in Petunia hybrida (Petunia).